A 171-amino-acid chain; its full sequence is uncharacterized protein (171 aa).

The first 20 residues, 1 to 20 (MRDFYLFLGAVFLLVLGVWA), serve as a signal peptide directing secretion.

This is an uncharacterized protein from Aquifex aeolicus (strain VF5).